Reading from the N-terminus, the 649-residue chain is Microtubule-associated protein VP6 (649 aa).

Its subcellular location is the virion. The protein resides in the host cytoplasm. It localises to the host cytoskeleton. Minor inner capsid component. Displays NTPase and RNA 5'-triphosphatase (RTPase) activities. May function as a cofactor of polymerase VP2. Associates with microtubules and plays a role in the formation, structural organization and morphology of viral inclusions, where the assembly of cores and the replication of viral RNA occur. This is Microtubule-associated protein VP6 (S6) from Cryphonectria parasitica (Chestnut blight fungus).